We begin with the raw amino-acid sequence, 102 residues long: Hemoglobin subunit beta-Z (102 aa).

The 102-residue stretch at 1-102 (FGNLSSAQAI…VANALSHKYH (102 aa)) folds into the Globin domain. Positions 19 and 48 each coordinate heme b.

It belongs to the globin family. As to quaternary structure, heterotetramer of two alpha chains and two beta chains.

In terms of biological role, this is an embryonic beta chain. The polypeptide is Hemoglobin subunit beta-Z (HBBZ) (Mesocricetus auratus (Golden hamster)).